We begin with the raw amino-acid sequence, 113 residues long: Non-structural protein 1 (113 aa).

This sequence belongs to the pneumovirus non-structural protein 1 family.

The protein localises to the host cytoplasm. Its subcellular location is the host mitochondrion. Its function is as follows. May play a minor role in antagonizing the type I IFN-mediated antiviral response. Additionally, NS1 may serve some inhibitory role in viral transcription and RNA replication. The protein is Non-structural protein 1 (1C) of Mus musculus (Mouse).